Here is a 185-residue protein sequence, read N- to C-terminus: Ribosome-recycling factor (185 aa).

This sequence belongs to the RRF family.

The protein resides in the cytoplasm. Its function is as follows. Responsible for the release of ribosomes from messenger RNA at the termination of protein biosynthesis. May increase the efficiency of translation by recycling ribosomes from one round of translation to another. The chain is Ribosome-recycling factor from Neorickettsia sennetsu (strain ATCC VR-367 / Miyayama) (Ehrlichia sennetsu).